The sequence spans 454 residues: Tryptophanase (454 aa).

Lys-256 carries the post-translational modification N6-(pyridoxal phosphate)lysine.

It belongs to the beta-eliminating lyase family. Homotetramer. Pyridoxal 5'-phosphate is required as a cofactor.

It carries out the reaction L-tryptophan + H2O = indole + pyruvate + NH4(+). Its pathway is amino-acid degradation; L-tryptophan degradation via pyruvate pathway; indole and pyruvate from L-tryptophan: step 1/1. This Hyphomonas neptunium (strain ATCC 15444) protein is Tryptophanase.